The primary structure comprises 400 residues: ATP phosphoribosyltransferase regulatory subunit (400 aa).

This sequence belongs to the class-II aminoacyl-tRNA synthetase family. HisZ subfamily. Heteromultimer composed of HisG and HisZ subunits.

It localises to the cytoplasm. It participates in amino-acid biosynthesis; L-histidine biosynthesis; L-histidine from 5-phospho-alpha-D-ribose 1-diphosphate: step 1/9. Required for the first step of histidine biosynthesis. May allow the feedback regulation of ATP phosphoribosyltransferase activity by histidine. This is ATP phosphoribosyltransferase regulatory subunit from Hahella chejuensis (strain KCTC 2396).